Reading from the N-terminus, the 265-residue chain is Deoxyguanosine kinase, mitochondrial (265 aa).

32-40 (GNIAVGKST) provides a ligand contact to ATP. Residues glutamate 57, tyrosine 88, glutamine 99, and arginine 106 each coordinate substrate. Glutamate 129 acts as the Proton acceptor in catalysis. Arginine 130 and aspartate 135 together coordinate substrate. 190 to 194 (RLQRR) is a binding site for ATP. Glutamate 199 serves as a coordination point for substrate. 242–244 (EDF) is an ATP binding site.

It belongs to the DCK/DGK family. Homodimer.

It localises to the mitochondrion. It catalyses the reaction 2'-deoxyguanosine + ATP = dGMP + ADP + H(+). Functionally, phosphorylates deoxyguanosine in the mitochondrial matrix with high efficiency but shows very low activity against other deoxynucleosides. The sequence is that of Deoxyguanosine kinase, mitochondrial from Xenopus laevis (African clawed frog).